Consider the following 121-residue polypeptide: Basic phospholipase A2 homolog piratoxin-2 (121 aa).

7 cysteine pairs are disulfide-bonded: C26/C115, C28/C44, C43/C95, C49/C121, C50/C88, C57/C81, and C75/C86. Positions 105 to 117 (KKYRYHLKPFCKK) are important for membrane-damaging activities in eukaryotes and bacteria; heparin-binding.

The protein belongs to the phospholipase A2 family. Group II subfamily. K49 sub-subfamily. Homodimer; non-covalently linked. As to expression, expressed by the venom gland.

It localises to the secreted. In terms of biological role, snake venom phospholipase A2 (PLA2) homolog that lacks enzymatic activity. Shows myotoxic activity and edema-inducing activities in vivo. A model of myotoxic mechanism has been proposed: an apo Lys49-PLA2 is activated by the entrance of a hydrophobic molecule (e.g. fatty acid) at the hydrophobic channel of the protein leading to a reorientation of a monomer. This reorientation causes a transition between 'inactive' to 'active' states, causing alignment of C-terminal and membrane-docking sites (MDoS) side-by-side and putting the membrane-disruption sites (MDiS) in the same plane, exposed to solvent and in a symmetric position for both monomers. The MDoS region stabilizes the toxin on membrane by the interaction of charged residues with phospholipid head groups. Subsequently, the MDiS region destabilizes the membrane with penetration of hydrophobic residues. This insertion causes a disorganization of the membrane, allowing an uncontrolled influx of ions (i.e. calcium and sodium), and eventually triggering irreversible intracellular alterations and cell death. This is Basic phospholipase A2 homolog piratoxin-2 from Bothrops pirajai (Piraja's lancehead).